A 151-amino-acid polypeptide reads, in one-letter code: MKRSGILNAELGEALATLGHTDLLLVVDAGFPVPRDAHRIDLALAENLPDLRTVLGLIADELVVEGVVRAEDVPSHNPRLDSWLHERFSGAEFTTRPHAEVLGELAREAKAVVRTGAFEPWGNIGLYCGVDAPRWFGGEGVVVPEQYASKV.

H20 serves as the catalytic Proton donor. Substrate-binding positions include D28, H98, and 121 to 123; that span reads WGN.

This sequence belongs to the RbsD / FucU family. RbsD subfamily. As to quaternary structure, homodecamer.

It localises to the cytoplasm. It carries out the reaction beta-D-ribopyranose = beta-D-ribofuranose. The protein operates within carbohydrate metabolism; D-ribose degradation; D-ribose 5-phosphate from beta-D-ribopyranose: step 1/2. Catalyzes the interconversion of beta-pyran and beta-furan forms of D-ribose. The chain is D-ribose pyranase 1 from Streptomyces griseus subsp. griseus (strain JCM 4626 / CBS 651.72 / NBRC 13350 / KCC S-0626 / ISP 5235).